The primary structure comprises 325 residues: Small ribosomal subunit protein RACK1 (325 aa).

WD repeat units lie at residues 5 to 48, 58 to 99, 100 to 141, 143 to 186, 187 to 227, 228 to 268, and 269 to 320; these read QMKL…WDVD, IGRP…WDLN, QGVS…WNTL, QCKY…WNLG, NCRL…LWDL, NEGK…WDLE, and DKKE…YQVS.

It belongs to the WD repeat G protein beta family. Ribosomal protein RACK1 subfamily.

Functionally, required for the expression of antimicrobial peptide nlp-29 in response to fungal infection or physical injury. This Caenorhabditis elegans protein is Small ribosomal subunit protein RACK1 (rack-1).